The following is a 343-amino-acid chain: UDP-3-O-acylglucosamine N-acyltransferase (343 aa).

H239 acts as the Proton acceptor in catalysis.

The protein belongs to the transferase hexapeptide repeat family. LpxD subfamily. As to quaternary structure, homotrimer.

The enzyme catalyses a UDP-3-O-[(3R)-3-hydroxyacyl]-alpha-D-glucosamine + a (3R)-hydroxyacyl-[ACP] = a UDP-2-N,3-O-bis[(3R)-3-hydroxyacyl]-alpha-D-glucosamine + holo-[ACP] + H(+). Its pathway is bacterial outer membrane biogenesis; LPS lipid A biosynthesis. Catalyzes the N-acylation of UDP-3-O-acylglucosamine using 3-hydroxyacyl-ACP as the acyl donor. Is involved in the biosynthesis of lipid A, a phosphorylated glycolipid that anchors the lipopolysaccharide to the outer membrane of the cell. This is UDP-3-O-acylglucosamine N-acyltransferase from Vibrio parahaemolyticus serotype O3:K6 (strain RIMD 2210633).